Reading from the N-terminus, the 501-residue chain is Serine/threonine-protein kinase pelle (501 aa).

A disordered region spans residues 1 to 25; sequence MSGVQTAEAEAQAQNQANGNRTRSR. Residues 7 to 18 show a composition bias toward low complexity; it reads AEAEAQAQNQAN. In terms of domain architecture, Death spans 55–121; sequence WQQLATAVKL…NAMRLIKDYV (67 aa). Positions 144–176 are disordered; it reads DSSAKVNNGPPFPSSSGVSNSNNNRTSTTATEE. A compositionally biased stretch (low complexity) spans 149–167; it reads VNNGPPFPSSSGVSNSNNN. The Protein kinase domain occupies 213–499; that stretch reads WSPDNRLGQG…AVLKRFEPFV (287 aa). ATP-binding positions include 219–227 and Lys-240; that span reads LGQGGFGDV. Catalysis depends on Asp-346, which acts as the Proton acceptor. ATP contacts are provided by residues 348-351 and Asp-364; that span reads KPAN.

It belongs to the protein kinase superfamily. TKL Ser/Thr protein kinase family. Pelle subfamily. As to quaternary structure, interacts (via Death domain) with tub (via Death domain). Interacts with Pellino (Pli).

The protein resides in the cell membrane. It localises to the cytoplasm. The enzyme catalyses L-seryl-[protein] + ATP = O-phospho-L-seryl-[protein] + ADP + H(+). The catalysed reaction is L-threonyl-[protein] + ATP = O-phospho-L-threonyl-[protein] + ADP + H(+). In terms of biological role, plays an essential role in the Tl receptor signaling pathway that establishes embryonic dorsoventral polarity; the signal directs import of dl into ventral and ventrolateral nuclei, thereby establishing dorsoventral polarity. Tub recruits pll to the plasma membrane and protein-protein interaction activates pll. The chain is Serine/threonine-protein kinase pelle (pll) from Drosophila melanogaster (Fruit fly).